Here is a 256-residue protein sequence, read N- to C-terminus: Imidazole glycerol phosphate synthase subunit HisF (256 aa).

Active-site residues include aspartate 12 and aspartate 131.

It belongs to the HisA/HisF family. As to quaternary structure, heterodimer of HisH and HisF.

It is found in the cytoplasm. It catalyses the reaction 5-[(5-phospho-1-deoxy-D-ribulos-1-ylimino)methylamino]-1-(5-phospho-beta-D-ribosyl)imidazole-4-carboxamide + L-glutamine = D-erythro-1-(imidazol-4-yl)glycerol 3-phosphate + 5-amino-1-(5-phospho-beta-D-ribosyl)imidazole-4-carboxamide + L-glutamate + H(+). It functions in the pathway amino-acid biosynthesis; L-histidine biosynthesis; L-histidine from 5-phospho-alpha-D-ribose 1-diphosphate: step 5/9. IGPS catalyzes the conversion of PRFAR and glutamine to IGP, AICAR and glutamate. The HisF subunit catalyzes the cyclization activity that produces IGP and AICAR from PRFAR using the ammonia provided by the HisH subunit. The chain is Imidazole glycerol phosphate synthase subunit HisF from Pseudomonas paraeruginosa (strain DSM 24068 / PA7) (Pseudomonas aeruginosa (strain PA7)).